A 252-amino-acid polypeptide reads, in one-letter code: Reaction center protein L chain (252 aa).

3 helical membrane-spanning segments follow: residues 8–30 (FFGV…GAAL), 58–86 (GGLW…SRKL), and 91–113 (HVPA…RPLL). (7R,8Z)-bacteriochlorophyll b is bound by residues His128 and His148. The helical transmembrane segment at 146–173 (PMHMVAVTLFFTTTLALALHGSLVLAAI) threads the bilayer. Fe cation is bound at residue His165. A ubiquinone is bound at residue Phe191. Residues 200–225 (GTLGIHRLGLFLALGAGFASATCILL) form a helical membrane-spanning segment. His205 contacts Fe cation.

The protein belongs to the reaction center PufL/M/PsbA/D family. As to quaternary structure, reaction center is composed of four bacteriochlorophylls, two bacteriopheophytins, two ubiquinones, one iron, and two highly hydrophobic polypeptide chains (designated L and M).

It is found in the cell inner membrane. Its function is as follows. The reaction center is a membrane-bound complex that mediates the initial photochemical event in the electron transfer process of photosynthesis. The protein is Reaction center protein L chain (pufL) of Acidiphilium cryptum.